Here is a 406-residue protein sequence, read N- to C-terminus: 2,3-bisphosphoglycerate-independent phosphoglycerate mutase (406 aa).

Residues 164–184 (VSSNDPKKTGVQPKTIHPDDD) form a disordered region.

The protein belongs to the BPG-independent phosphoglycerate mutase family. A-PGAM subfamily.

It catalyses the reaction (2R)-2-phosphoglycerate = (2R)-3-phosphoglycerate. Its pathway is carbohydrate degradation; glycolysis; pyruvate from D-glyceraldehyde 3-phosphate: step 3/5. Functionally, catalyzes the interconversion of 2-phosphoglycerate and 3-phosphoglycerate. This chain is 2,3-bisphosphoglycerate-independent phosphoglycerate mutase, found in Methanocorpusculum labreanum (strain ATCC 43576 / DSM 4855 / Z).